The sequence spans 66 residues: Toxin Tppa1 (66 aa).

The LCN-type CS-alpha/beta domain occupies 1–63; it reads KDGYLVGNDG…TWSRSTNRCG (63 aa). Cystine bridges form between C11-C62, C15-C37, C23-C43, and C27-C45.

The protein belongs to the long (4 C-C) scorpion toxin superfamily. Sodium channel inhibitor family. Beta subfamily. As to expression, expressed by the venom gland.

Its subcellular location is the secreted. Functionally, beta toxins bind voltage-independently at site-4 of sodium channels (Nav) and shift the voltage of activation toward more negative potentials thereby affecting sodium channel activation and promoting spontaneous and repetitive firing. This Tityus pachyurus (Colombian scorpion) protein is Toxin Tppa1.